The sequence spans 563 residues: Autophagy-related protein 18 (563 aa).

WD repeat units follow at residues 36–74 (KTDD…GKCY), 247–287 (AHKS…KLFQ), and 292–331 (TYST…ALEN). A L/FRRG motif motif is present at residues 288 to 292 (FRRGT). The tract at residues 329 to 430 (LENKHKKKKA…SSQAAKNEPL (102 aa)) is disordered. Residues 366–393 (TQDDDEFADDGDDSDEAVEGDDNDDESL) are compositionally biased toward acidic residues. Positions 404 to 417 (SQGSSNSFASFNSG) are enriched in low complexity.

This sequence belongs to the WD repeat PROPPIN family. As to quaternary structure, component of the PI(3,5)P2 regulatory complex.

The protein localises to the preautophagosomal structure membrane. Its subcellular location is the vacuole membrane. It is found in the endosome membrane. The PI(3,5)P2 regulatory complex regulates both the synthesis and turnover of phosphatidylinositol 3,5-bisphosphate (PtdIns(3,5)P2). Necessary for proper vacuole morphology. Plays an important role in osmotically-induced vacuole fragmentation. Required for cytoplasm to vacuole transport (Cvt) vesicle formation, pexophagy and starvation-induced autophagy. Involved in correct ATG9 trafficking to the pre-autophagosomal structure. Might also be involved in premeiotic DNA replication. This Scheffersomyces stipitis (strain ATCC 58785 / CBS 6054 / NBRC 10063 / NRRL Y-11545) (Yeast) protein is Autophagy-related protein 18 (ATG18).